We begin with the raw amino-acid sequence, 659 residues long: Tyrosine-protein kinase BTK (659 aa).

At alanine 2 the chain carries N-acetylalanine. One can recognise a PH domain in the interval 3-133 (AVILESIFLK…WIHQLKNVIR (131 aa)). The interval 12 to 24 (KRSQQKKKTSPLN) is inositol-(1,3,4,5)-tetrakisphosphate 1-binding. Serine 21 is modified (phosphoserine). Lysine 26, arginine 28, and tyrosine 39 together coordinate 1D-myo-inositol 1,3,4,5-tetrakisphosphate. Tyrosine 40 is subject to Phosphotyrosine. Lysine 53 serves as a coordination point for 1D-myo-inositol 1,3,4,5-tetrakisphosphate. Phosphoserine is present on residues serine 55 and serine 115. The Btk-type zinc-finger motif lies at 135-171 (NSDLVQKYHPCFWIDGQYLCCSQTAKNAMGCQILENR). Zn(2+)-binding residues include histidine 143, cysteine 154, cysteine 155, and cysteine 165. The interval 171-210 (RNGSLKPGSSHRKTKKPLPPTPEEDQILKKPLPPEPAAAP) is disordered. Serine 180 bears the Phosphoserine; by PKC/PRKCB mark. Phosphothreonine is present on threonine 191. The region spanning 214–274 (SELKKVVALY…PSNYVTEAED (61 aa)) is the SH3 domain. At tyrosine 223 the chain carries Phosphotyrosine; by autocatalysis. In terms of domain architecture, SH2 spans 281–377 (WYSKHMTRSQ…GLISRLKYPV (97 aa)). Residues tyrosine 344 and tyrosine 361 each carry the phosphotyrosine modification. In terms of domain architecture, Protein kinase spans 402-655 (LTFLKELGTG…ILLSNILDVM (254 aa)). ATP is bound by residues 408–416 (LGTGQFGVV) and lysine 430. 474–477 (TEYM) is a binding site for clofedanol. Residue 474 to 477 (TEYM) participates in dasatinib binding. The active-site Proton acceptor is the aspartate 521. Clofedanol is bound at residue leucine 542. Tyrosine 551 bears the Phosphotyrosine; by LYN and SYK mark. A CAV1-binding motif is present at residues 581-588 (WAFGVLMW). Position 604 is a phosphoserine (serine 604). Position 617 is a phosphotyrosine (tyrosine 617). 2 positions are modified to phosphoserine: serine 623 and serine 659.

Belongs to the protein kinase superfamily. Tyr protein kinase family. TEC subfamily. In terms of assembly, part of a complex composed of EEIG1, TNFRSF11A/RANK, PLCG2, GAB2, TEC and BTK; complex formation increases in the presence of TNFSF11/RANKL. Binds GTF2I through the PH domain. Interacts with SH3BP5 via the SH3 domain. Interacts with IBTK via its PH domain. Interacts with ARID3A, CAV1, FASLG, PIN1, TLR8 and TLR9. Interacts with MPL/TPOR. The cofactor is Zn(2+). Following B-cell receptor (BCR) engagement, translocates to the plasma membrane where it gets phosphorylated at Tyr-551 by LYN and SYK. Phosphorylation at Tyr-551 is followed by autophosphorylation of Tyr-223 which may create a docking site for a SH2 containing protein. Phosphorylation at Ser-180 by PRKCB, leads in translocation of BTK back to the cytoplasmic fraction. Phosphorylation at Ser-21 and Ser-115 creates a binding site for PIN1 at these Ser-Pro motifs, and promotes it's recruitment. Predominantly expressed in B-lymphocytes.

It localises to the cytoplasm. The protein localises to the cell membrane. It is found in the nucleus. Its subcellular location is the membrane raft. The catalysed reaction is L-tyrosyl-[protein] + ATP = O-phospho-L-tyrosyl-[protein] + ADP + H(+). Its activity is regulated as follows. Activated by phosphorylation. In primary B lymphocytes, is almost always non-phosphorylated and is thus catalytically inactive. Stimulation of TLR8 and TLR9 causes BTK activation. As a negative feedback mechanism to fine-tune BCR signaling, activated PRKCB down-modulates BTK function via direct phosphorylation of BTK at Ser-180, resulting in translocation of BTK back to the cytoplasmic fraction. PIN1, SH3BP5, and IBTK were also identified as BTK activity inhibitors. Interaction with CAV1 leads to dramatic down-regulation of the kinase activity of BTK. LFM-13A is a specific inhibitor of BTK. Dasatinib, a cancer drug acting as a tyrosine kinase inhibitor, also blocks BTK activity. Non-receptor tyrosine kinase indispensable for B lymphocyte development, differentiation and signaling. Binding of antigen to the B-cell antigen receptor (BCR) triggers signaling that ultimately leads to B-cell activation. After BCR engagement and activation at the plasma membrane, phosphorylates PLCG2 at several sites, igniting the downstream signaling pathway through calcium mobilization, followed by activation of the protein kinase C (PKC) family members. PLCG2 phosphorylation is performed in close cooperation with the adapter protein B-cell linker protein BLNK. BTK acts as a platform to bring together a diverse array of signaling proteins and is implicated in cytokine receptor signaling pathways. Plays an important role in the function of immune cells of innate as well as adaptive immunity, as a component of the Toll-like receptors (TLR) pathway. The TLR pathway acts as a primary surveillance system for the detection of pathogens and are crucial to the activation of host defense. Especially, is a critical molecule in regulating TLR9 activation in splenic B-cells. Within the TLR pathway, induces tyrosine phosphorylation of TIRAP which leads to TIRAP degradation. BTK also plays a critical role in transcription regulation. Induces the activity of NF-kappa-B, which is involved in regulating the expression of hundreds of genes. BTK is involved on the signaling pathway linking TLR8 and TLR9 to NF-kappa-B. Acts as an activator of NLRP3 inflammasome assembly by mediating phosphorylation of NLRP3. Transiently phosphorylates transcription factor GTF2I on tyrosine residues in response to BCR. GTF2I then translocates to the nucleus to bind regulatory enhancer elements to modulate gene expression. ARID3A and NFAT are other transcriptional target of BTK. BTK is required for the formation of functional ARID3A DNA-binding complexes. There is however no evidence that BTK itself binds directly to DNA. BTK has a dual role in the regulation of apoptosis. Plays a role in STING1-mediated induction of type I interferon (IFN) response by phosphorylating DDX41. In Homo sapiens (Human), this protein is Tyrosine-protein kinase BTK (BTK).